The primary structure comprises 141 residues: Putative pre-16S rRNA nuclease (141 aa).

This sequence belongs to the YqgF nuclease family.

It localises to the cytoplasm. In terms of biological role, could be a nuclease involved in processing of the 5'-end of pre-16S rRNA. The protein is Putative pre-16S rRNA nuclease of Syntrophomonas wolfei subsp. wolfei (strain DSM 2245B / Goettingen).